The primary structure comprises 138 residues: MAEKLKVELVTPYKKVLSEEVDEITATGALGEFGVLPGHAPFLTSLKIGELAYRKDGVSHHMALNWGYFEVENDTVTVLVETAEKADEIDLERAKAALGRAEVELKALTPEDKNFRIYEAALERALIRVQVAGKATRR.

This sequence belongs to the ATPase epsilon chain family. In terms of assembly, F-type ATPases have 2 components, CF(1) - the catalytic core - and CF(0) - the membrane proton channel. CF(1) has five subunits: alpha(3), beta(3), gamma(1), delta(1), epsilon(1). CF(0) has three main subunits: a, b and c.

It localises to the cell inner membrane. Produces ATP from ADP in the presence of a proton gradient across the membrane. This is ATP synthase epsilon chain from Geobacter sp. (strain M21).